The primary structure comprises 110 residues: Large ribosomal subunit protein uL22 (110 aa).

It belongs to the universal ribosomal protein uL22 family. In terms of assembly, part of the 50S ribosomal subunit.

This protein binds specifically to 23S rRNA; its binding is stimulated by other ribosomal proteins, e.g. L4, L17, and L20. It is important during the early stages of 50S assembly. It makes multiple contacts with different domains of the 23S rRNA in the assembled 50S subunit and ribosome. Its function is as follows. The globular domain of the protein is located near the polypeptide exit tunnel on the outside of the subunit, while an extended beta-hairpin is found that lines the wall of the exit tunnel in the center of the 70S ribosome. The sequence is that of Large ribosomal subunit protein uL22 from Photorhabdus laumondii subsp. laumondii (strain DSM 15139 / CIP 105565 / TT01) (Photorhabdus luminescens subsp. laumondii).